A 646-amino-acid polypeptide reads, in one-letter code: Lipoteichoic acid synthase (646 aa).

Topologically, residues 1-7 are cytoplasmic; it reads MKLHKKK. A helical membrane pass occupies residues 8-28; that stretch reads LTLFAFFILTVLTVTLKTYFS. Residues 29–43 lie on the Extracellular side of the membrane; that stretch reads YYVDFSLGVKGLVQN. The chain crosses the membrane as a helical span at residues 44–64; the sequence is LILLMNPYSLIALVLSIFLFF. Over 65–68 the chain is Cytoplasmic; sequence KGKK. The chain crosses the membrane as a helical span at residues 69 to 89; it reads AFWFIFIGGFILTFLLYANVV. Residues 90–119 are Extracellular-facing; it reads YFRFFSDFLTFSTLNQAGNVESMGGAVTAS. Residues 120–140 form a helical membrane-spanning segment; the sequence is FKWYDFVYFIDTIIYLFVLIF. At 141–153 the chain is on the cytoplasmic side; the sequence is KQKWLDKRVFSKK. Residues 154 to 174 traverse the membrane as a helical segment; it reads FVPVVMAASIALFFLNLAFAE. At 175–646 the chain is on the extracellular side; the sequence is SDRPELLTRT…KTGPKGQERK (472 aa). 2 residues coordinate Mn(2+): Glu-255 and Thr-300. Residue Thr-300 is part of the active site. His-416 lines the substrate pocket. Mn(2+) contacts are provided by Asp-475 and His-476. The interval 579–646 is disordered; the sequence is IYDNKNNEPM…KTGPKGQERK (68 aa). Basic and acidic residues-rich tracts occupy residues 580-607 and 625-646; these read YDNK…KDLQ and DFDK…QERK.

It belongs to the LTA synthase family. Post-translationally, proteolytically cleaved.

It localises to the cell membrane. It is found in the secreted. It participates in cell wall biogenesis; lipoteichoic acid biosynthesis. In terms of biological role, catalyzes the polymerization of lipoteichoic acid (LTA) polyglycerol phosphate, a reaction that presumably uses phosphatidylglycerol (PG) as substrate. Is required for staphylococcal growth and cell division process. The chain is Lipoteichoic acid synthase (ltaS) from Staphylococcus saprophyticus subsp. saprophyticus (strain ATCC 15305 / DSM 20229 / NCIMB 8711 / NCTC 7292 / S-41).